A 359-amino-acid chain; its full sequence is Peptide chain release factor 1 (359 aa).

Q236 is modified (N5-methylglutamine).

This sequence belongs to the prokaryotic/mitochondrial release factor family. Methylated by PrmC. Methylation increases the termination efficiency of RF1.

Its subcellular location is the cytoplasm. Peptide chain release factor 1 directs the termination of translation in response to the peptide chain termination codons UAG and UAA. This chain is Peptide chain release factor 1, found in Streptococcus agalactiae.